The chain runs to 525 residues: Coronin-2A (525 aa).

WD repeat units follow at residues 80 to 120 (GHRG…LTKN), 130 to 170 (GHAR…SVIM), 178 to 217 (CHQDVILSMSFNTNGSLLATACKDRKIRVLDPRAGTVLQE), 220 to 263 (YKGH…VPVT), and 269 to 308 (GSSGVLFPFYDADTNMLYVVGKGDRNIHYYEISANKPHLN). The stretch at 485-524 (QMFYRQQDEIRRLRELVTQREVQAKQLELEIRNLRMNSPR) forms a coiled coil.

The protein belongs to the WD repeat coronin family. As to quaternary structure, binds actin. Component of the N-Cor repressor complex, at least composed of NCOR1, NCOR2, HDAC3, TBL1X, TBL1R, CORO2A and GPS2.

This Bos taurus (Bovine) protein is Coronin-2A (CORO2A).